A 695-amino-acid chain; its full sequence is Polyribonucleotide nucleotidyltransferase (695 aa).

The Mg(2+) site is built by D486 and D492. One can recognise a KH domain in the interval 553-612; it reads PRIETMQINTSKIATVIGPGGKQIRQIIERSGAQVDINDDGVINIAASTQESINKAKELI. One can recognise an S1 motif domain in the interval 622-690; it reads GKVYNGRVTS…EKGQLKLSHK (69 aa).

Belongs to the polyribonucleotide nucleotidyltransferase family. Mg(2+) serves as cofactor.

The protein localises to the cytoplasm. It carries out the reaction RNA(n+1) + phosphate = RNA(n) + a ribonucleoside 5'-diphosphate. Its function is as follows. Involved in mRNA degradation. Catalyzes the phosphorolysis of single-stranded polyribonucleotides processively in the 3'- to 5'-direction. The polypeptide is Polyribonucleotide nucleotidyltransferase (Chlamydia trachomatis serovar L2 (strain ATCC VR-902B / DSM 19102 / 434/Bu)).